Reading from the N-terminus, the 279-residue chain is Four and a half LIM domains protein 2 (279 aa).

Residues 7–31 form a C4-type zinc finger; that stretch reads CHHCNESLYGKKYILKEENPHCVAC. 3 LIM zinc-binding domains span residues 40–92, 101–153, and 162–212; these read CEEC…CTDC, CQEC…CVPC, and CVQC…CLTC. K78 is covalently cross-linked (Glycyl lysine isopeptide (Lys-Gly) (interchain with G-Cter in SUMO2)). Glycyl lysine isopeptide (Lys-Gly) (interchain with G-Cter in SUMO2) cross-links involve residues K167 and K220. The region spanning 221–275 is the LIM zinc-binding 4 domain; it reads CAGCTNPISGLGGTKYISFEERQWHNDCFNCKKCSLSLVGRGFLTERDDILCPDC. The residue at position 238 (S238) is a Phosphoserine.

As to quaternary structure, interacts with ZNF638 and TTN/titin. Interacts with E4F1. Interacts with GRB7. Interacts with SIRT1 and FOXO1. Interacts with CEFIP. Interacts with calcineurin. Interacts with FOXK1. As to expression, highly expressed in heart but also detectable in brain and skeletal muscle.

Its subcellular location is the cytoplasm. It is found in the nucleus. It localises to the myofibril. The protein resides in the sarcomere. The protein localises to the z line. Its function is as follows. May function as a molecular transmitter linking various signaling pathways to transcriptional regulation. Negatively regulates the transcriptional repressor E4F1 and may function in cell growth. Inhibits the transcriptional activity of FOXO1 and its apoptotic function by enhancing the interaction of FOXO1 with SIRT1 and FOXO1 deacetylation. Negatively regulates the calcineurin/NFAT signaling pathway in cardiomyocytes. In Mus musculus (Mouse), this protein is Four and a half LIM domains protein 2 (Fhl2).